Reading from the N-terminus, the 54-residue chain is Large ribosomal subunit protein bL33 (54 aa).

The protein belongs to the bacterial ribosomal protein bL33 family.

The chain is Large ribosomal subunit protein bL33 from Thermus thermophilus (strain ATCC BAA-163 / DSM 7039 / HB27).